The chain runs to 219 residues: Large ribosomal subunit protein uL4 (219 aa).

Residues 45 to 103 (ARRQGTHATKTRGQVRGGGRKPYRQKGTGRARQGSIRAPQFTGGGTVHGPQPRDYDQRT) form a disordered region. Over residues 62 to 73 (GGRKPYRQKGTG) the composition is skewed to basic residues.

The protein belongs to the universal ribosomal protein uL4 family. As to quaternary structure, part of the 50S ribosomal subunit.

One of the primary rRNA binding proteins, this protein initially binds near the 5'-end of the 23S rRNA. It is important during the early stages of 50S assembly. It makes multiple contacts with different domains of the 23S rRNA in the assembled 50S subunit and ribosome. Functionally, forms part of the polypeptide exit tunnel. This Corynebacterium kroppenstedtii (strain DSM 44385 / JCM 11950 / CIP 105744 / CCUG 35717) protein is Large ribosomal subunit protein uL4.